A 398-amino-acid polypeptide reads, in one-letter code: DNA-directed RNA polymerase III subunit RPC4 (398 aa).

Residues 1–114 (MSEGNAAGEP…SHSIFEQGPA (114 aa)) are disordered. S2 carries the post-translational modification N-acetylserine. A Phosphoserine modification is found at S42. Residues 66–100 (KIKEEPKEEVTVKKEKRERDRDRQREGHGRGRGRP) show a composition bias toward basic and acidic residues. Residues K68 and K78 each participate in a glycyl lysine isopeptide (Lys-Gly) (interchain with G-Cter in SUMO2) cross-link. Omega-N-methylarginine occurs at positions 95, 97, and 99. Glycyl lysine isopeptide (Lys-Gly) (interchain with G-Cter in SUMO2) cross-links involve residues K141, K152, K160, K190, K199, K206, K220, K285, K302, K310, and K396. The interval 220–244 (KEEPRDEEEEAKMKAPPKAARKTPG) is disordered.

This sequence belongs to the eukaryotic RPC4/POLR3D RNA polymerase subunit family. In terms of assembly, component of the RNA polymerase III complex consisting of 17 subunits: a ten-subunit horseshoe-shaped catalytic core composed of POLR3A/RPC1, POLR3B/RPC2, POLR1C/RPAC1, POLR1D/RPAC2, POLR3K/RPC10, POLR2E/RPABC1, POLR2F/RPABC2, POLR2H/RPABC3, POLR2K/RPABC4 and POLR2L/RPABC5; a mobile stalk composed of two subunits POLR3H/RPC8 and CRCP/RPC9, protruding from the core and functioning primarily in transcription initiation; and additional subunits homologous to general transcription factors of the RNA polymerase II machinery, POLR3C/RPC3-POLR3F/RPC6-POLR3G/RPC7 heterotrimer required for transcription initiation and POLR3D/RPC4-POLR3E/RPC5 heterodimer involved in both transcription initiation and termination. Post-translationally, sumoylation on Lys-141 can serve as a signal to mark misfolded Pol III for proteasomal degradation.

The protein resides in the nucleus. Its function is as follows. DNA-dependent RNA polymerase catalyzes the transcription of DNA into RNA using the four ribonucleoside triphosphates as substrates. Specific peripheric component of RNA polymerase III (Pol III) which synthesizes small non-coding RNAs including 5S rRNA, snRNAs, tRNAs and miRNAs from at least 500 distinct genomic loci. Assembles with POLR3E/RPC5 forming a subcomplex that binds the Pol III core. Enables recruitment of Pol III at transcription initiation site and drives transcription initiation from both type 2 and type 3 DNA promoters. Required for efficient transcription termination and reinitiation. Pol III plays a key role in sensing and limiting infection by intracellular bacteria and DNA viruses. Acts as nuclear and cytosolic DNA sensor involved in innate immune response. Can sense non-self dsDNA that serves as template for transcription into dsRNA. The non-self RNA polymerase III transcripts, such as Epstein-Barr virus-encoded RNAs (EBERs) induce type I interferon and NF-kappa-B through the RIG-I pathway. This is DNA-directed RNA polymerase III subunit RPC4 from Homo sapiens (Human).